Consider the following 111-residue polypeptide: Phosphoribosyl-ATP pyrophosphatase (111 aa).

The protein belongs to the PRA-PH family.

The protein localises to the cytoplasm. It carries out the reaction 1-(5-phospho-beta-D-ribosyl)-ATP + H2O = 1-(5-phospho-beta-D-ribosyl)-5'-AMP + diphosphate + H(+). The protein operates within amino-acid biosynthesis; L-histidine biosynthesis; L-histidine from 5-phospho-alpha-D-ribose 1-diphosphate: step 2/9. In Pseudomonas putida (strain ATCC 700007 / DSM 6899 / JCM 31910 / BCRC 17059 / LMG 24140 / F1), this protein is Phosphoribosyl-ATP pyrophosphatase.